The sequence spans 618 residues: 1-aminocyclopropane-1-carboxylate synthase-like protein 1 (618 aa).

Positions 11–26 (QGTQTPAAQTTCAPST) are enriched in low complexity. Residues 11–54 (QGTQTPAAQTTCAPSTMSSSSRPPLETLQAQSVSADETPGSALP) form a disordered region. Residues 27–45 (MSSSSRPPLETLQAQSVSA) show a composition bias toward polar residues. Glutamate 122 is a binding site for substrate. An N6-(pyridoxal phosphate)lysine modification is found at lysine 340.

It belongs to the class-I pyridoxal-phosphate-dependent aminotransferase family.

The sequence is that of 1-aminocyclopropane-1-carboxylate synthase-like protein 1 (accs) from Takifugu rubripes (Japanese pufferfish).